We begin with the raw amino-acid sequence, 140 residues long: Small ribosomal subunit protein uS12 (140 aa).

Asp-102 is modified (3-methylthioaspartic acid).

This sequence belongs to the universal ribosomal protein uS12 family. As to quaternary structure, part of the 30S ribosomal subunit. Contacts proteins S8 and S17. May interact with IF1 in the 30S initiation complex.

In terms of biological role, with S4 and S5 plays an important role in translational accuracy. Interacts with and stabilizes bases of the 16S rRNA that are involved in tRNA selection in the A site and with the mRNA backbone. Located at the interface of the 30S and 50S subunits, it traverses the body of the 30S subunit contacting proteins on the other side and probably holding the rRNA structure together. The combined cluster of proteins S8, S12 and S17 appears to hold together the shoulder and platform of the 30S subunit. The protein is Small ribosomal subunit protein uS12 of Geobacillus sp. (strain WCH70).